The primary structure comprises 143 residues: Putative pre-16S rRNA nuclease (143 aa).

The protein belongs to the YqgF nuclease family.

Its subcellular location is the cytoplasm. In terms of biological role, could be a nuclease involved in processing of the 5'-end of pre-16S rRNA. This Lactococcus lactis subsp. lactis (strain IL1403) (Streptococcus lactis) protein is Putative pre-16S rRNA nuclease (ybeB).